A 183-amino-acid polypeptide reads, in one-letter code: Ferritin light chain 1 (183 aa).

The Ferritin-like diiron domain maps to 7 to 156 (QNYSTEVEAA…NHLTNLRRVA (150 aa)). Residues glutamate 54, glutamate 57, glutamate 58, glutamate 61, and glutamate 64 each contribute to the Fe cation site.

The protein belongs to the ferritin family. Oligomer of 24 subunits. There are two types of subunits: L (light) chain and H (heavy) chain. The major chain can be light or heavy, depending on the species and tissue type. The functional molecule forms a roughly spherical shell with a diameter of 12 nm and contains a central cavity into which the insoluble mineral iron core is deposited. Interacts with NCOA4. In terms of tissue distribution, in rat liver, the light chain is the major chain.

The protein localises to the cytoplasmic vesicle. The protein resides in the autophagosome. It localises to the cytoplasm. Its subcellular location is the autolysosome. Functionally, stores iron in a soluble, non-toxic, readily available form. Important for iron homeostasis. Iron is taken up in the ferrous form and deposited as ferric hydroxides after oxidation. Also plays a role in delivery of iron to cells. Mediates iron uptake in capsule cells of the developing kidney. Delivery to lysosomes by the cargo receptor NCOA4 for autophagic degradation and release or iron. The sequence is that of Ferritin light chain 1 (Ftl1) from Rattus norvegicus (Rat).